The chain runs to 316 residues: Retinol dehydrogenase 7 (316 aa).

An NADP(+)-binding site is contributed by 33-57 (FITGCDSGFGNLLARQLDRRGMRVL). Substrate is bound at residue serine 163. The Proton acceptor role is filled by tyrosine 175.

The protein belongs to the short-chain dehydrogenases/reductases (SDR) family. As to expression, highly expressed in liver. Also expressed in lung, eye, kidney, and brain.

It is found in the microsome. The protein localises to the endoplasmic reticulum. The enzyme catalyses all-trans-retinol--[retinol-binding protein] + NAD(+) = all-trans-retinal--[retinol-binding protein] + NADH + H(+). It participates in cofactor metabolism; retinol metabolism. Its function is as follows. Acts on androgens and retinols, i.e. has steroid 3-alpha- and 17-beta-dehydrogenase and cis/trans-retinol catalytic activities. The polypeptide is Retinol dehydrogenase 7 (Rdh7) (Mus musculus (Mouse)).